Reading from the N-terminus, the 96-residue chain is UPF0235 protein Shewmr4_1190 (96 aa).

Belongs to the UPF0235 family.

This chain is UPF0235 protein Shewmr4_1190, found in Shewanella sp. (strain MR-4).